A 374-amino-acid chain; its full sequence is MGLEAFSRSAPLTLGVELELQLVNTNDYDLAPYADDMLRLMKKTPLPGSVVPEMTNSMIEISTGICHSCSEVLGQLTPIRDALVKSADKLNIAVLGGGTHPFQQWHERRIYDKPRFRELSELYGYLSKQFTIFGQHVHIGCPDANAALLMLHRMSRYIPHFIALSASSPYVQGQDTAFDSARLNSVFAFPLSGRAPLALTWEDFGAYFDKMTRTGVVRSMKDFYWDIRPKPEFGTIEIRVFDTPLTIERAAALAGYVQSLGAWFLADQPFMPAEDDYLVYTYNRFQACRFGLEAVYVDPAAGGHMPLRQHILATMDEMASHAAAQGASSALHLLRTEVEAGQNDARWLRERQREEQLLAEVCRQAAQRFRGLAL.

This sequence belongs to the glutamate--cysteine ligase type 2 family. YbdK subfamily.

It catalyses the reaction L-cysteine + L-glutamate + ATP = gamma-L-glutamyl-L-cysteine + ADP + phosphate + H(+). ATP-dependent carboxylate-amine ligase which exhibits weak glutamate--cysteine ligase activity. This Verminephrobacter eiseniae (strain EF01-2) protein is Putative glutamate--cysteine ligase 2.